An 85-amino-acid polypeptide reads, in one-letter code: Large ribosomal subunit protein bL27 (85 aa).

This sequence belongs to the bacterial ribosomal protein bL27 family.

This Pseudomonas fluorescens (strain SBW25) protein is Large ribosomal subunit protein bL27.